The chain runs to 211 residues: Thymidylate kinase (211 aa).

7-14 (GMDGSGKT) provides a ligand contact to ATP.

Belongs to the thymidylate kinase family.

It carries out the reaction dTMP + ATP = dTDP + ADP. Its function is as follows. Phosphorylation of dTMP to form dTDP in both de novo and salvage pathways of dTTP synthesis. This chain is Thymidylate kinase, found in Mesoplasma florum (strain ATCC 33453 / NBRC 100688 / NCTC 11704 / L1) (Acholeplasma florum).